Reading from the N-terminus, the 438-residue chain is Putative ZDHHC-type palmitoyltransferase 7 (438 aa).

N-linked (GlcNAc...) asparagine glycosylation is found at Asn-12 and Asn-13. 2 helical membrane passes run 48–68 (IFCLVHFIVYCVIIFRKGTIL) and 77–97 (YFYLIWTHCVFFFAIGTYFLI). 3 N-linked (GlcNAc...) asparagine glycosylation sites follow: Asn-119, Asn-144, and Asn-157. The interval 183–239 (EDSINDDTITTTTTTTTTTSTSTIPEISNDDDDNNNENNNDNVNNRNNNNSNGEKED) is disordered. Composition is skewed to low complexity over residues 190 to 206 (TITTTTTTTTTTSTSTI) and 218 to 234 (NENNNDNVNNRNNNNSN). The N-linked (GlcNAc...) asparagine glycan is linked to Asn-231. The 51-residue stretch at 249–299 (YFCKKCLVDIPLRTKHCVKCNRCVLKYDHHCVFIGGCVGLNNHKNFLLFLL) folds into the DHHC domain. 2 helical membrane passes run 294-314 (FLLFLLAESLLLLLGLRIIVT) and 330-350 (IAIIPPTLLIFGGLCMPFALF). Residue Asn-360 is glycosylated (N-linked (GlcNAc...) asparagine).

The protein belongs to the DHHC palmitoyltransferase family.

It localises to the membrane. It carries out the reaction L-cysteinyl-[protein] + hexadecanoyl-CoA = S-hexadecanoyl-L-cysteinyl-[protein] + CoA. This Dictyostelium discoideum (Social amoeba) protein is Putative ZDHHC-type palmitoyltransferase 7.